Consider the following 401-residue polypeptide: Heat shock transcription factor, Y-linked (401 aa).

The span at 1–11 shows a compositional bias: polar residues; sequence MAHVSSETQDV. Residues 1 to 30 are disordered; it reads MAHVSSETQDVSPKDELTASEASTRSPLCE. A DNA-binding region spans residues 76–194; sequence LSLNFPRKLW…PQLLVRVKRR (119 aa).

The protein belongs to the HSF family. Testis-specific. Present in Sertoli cells and spermatogenic cells (at protein level).

The protein localises to the nucleus. It is found in the cytoplasm. The sequence is that of Heat shock transcription factor, Y-linked (HSFY1) from Homo sapiens (Human).